The following is a 418-amino-acid chain: UDP-N-acetylglucosamine 1-carboxyvinyltransferase (418 aa).

Phosphoenolpyruvate is bound at residue 22 to 23 (KN). R92 provides a ligand contact to UDP-N-acetyl-alpha-D-glucosamine. C116 (proton donor) is an active-site residue. C116 carries the 2-(S-cysteinyl)pyruvic acid O-phosphothioketal modification. Residues D305 and I327 each contribute to the UDP-N-acetyl-alpha-D-glucosamine site.

It belongs to the EPSP synthase family. MurA subfamily.

The protein localises to the cytoplasm. The enzyme catalyses phosphoenolpyruvate + UDP-N-acetyl-alpha-D-glucosamine = UDP-N-acetyl-3-O-(1-carboxyvinyl)-alpha-D-glucosamine + phosphate. The protein operates within cell wall biogenesis; peptidoglycan biosynthesis. Its function is as follows. Cell wall formation. Adds enolpyruvyl to UDP-N-acetylglucosamine. The sequence is that of UDP-N-acetylglucosamine 1-carboxyvinyltransferase from Gluconobacter oxydans (strain 621H) (Gluconobacter suboxydans).